The following is a 198-amino-acid chain: Recombination protein RecR (198 aa).

A C4-type zinc finger spans residues 57–72; it reads CSICGNLTDDDPCHIC. The Toprim domain maps to 80 to 175; sequence ETILVVEASK…KVTRLARGLA (96 aa).

It belongs to the RecR family.

In terms of biological role, may play a role in DNA repair. It seems to be involved in an RecBC-independent recombinational process of DNA repair. It may act with RecF and RecO. The polypeptide is Recombination protein RecR (Streptococcus equi subsp. zooepidemicus (strain MGCS10565)).